We begin with the raw amino-acid sequence, 670 residues long: DNA ligase (670 aa).

NAD(+) contacts are provided by residues 33–37 (DAEFD), 82–83 (SL), and E113. Catalysis depends on K115, which acts as the N6-AMP-lysine intermediate. Residues R136, E170, K285, and K309 each coordinate NAD(+). The Zn(2+) site is built by C403, C406, C421, and C427. The BRCT domain occupies 587–670 (EQNLYLSGKT…EVLKAGDNNG (84 aa)).

It belongs to the NAD-dependent DNA ligase family. LigA subfamily. Mg(2+) serves as cofactor. The cofactor is Mn(2+).

It catalyses the reaction NAD(+) + (deoxyribonucleotide)n-3'-hydroxyl + 5'-phospho-(deoxyribonucleotide)m = (deoxyribonucleotide)n+m + AMP + beta-nicotinamide D-nucleotide.. DNA ligase that catalyzes the formation of phosphodiester linkages between 5'-phosphoryl and 3'-hydroxyl groups in double-stranded DNA using NAD as a coenzyme and as the energy source for the reaction. It is essential for DNA replication and repair of damaged DNA. The chain is DNA ligase from Halothermothrix orenii (strain H 168 / OCM 544 / DSM 9562).